The sequence spans 194 residues: Cysteine and glycine-rich protein 3 (194 aa).

The interaction with TCAP stretch occupies residues 1-5 (MPNWG). The LIM zinc-binding 1 domain occupies 10–61 (CGACDKTVYHAEEIQCNGRSFHKTCFHCMACRKALDSTTVAAHESEIYCKVC). The Nuclear localization signal motif lies at 64 to 69 (RKYGPK). Residues 94-105 (QSPKPARAATTS) form an interaction with CLF2 region. A phosphoserine mark is found at Ser95, Ser111, and Ser153. The LIM zinc-binding 2 domain maps to 120–171 (CPRCGKSVYAAEKVMGGGKPWHKTCFPCAICGKSLESTNVTDKDGELYCKVC).

Self-associates. Oligomeric in the cytoplasm and monomeric in the nucleus. Homooligomers preferentially form along the actin cytoskeleton. Interacts with TCAP, ACTN2 and NRAP. Interacts with LDHD, SPTB, MYOD1, MYOG, MYF6. Interacts with GLRX3 (via C-terminus); GLRX3 and calcineurin compete for interaction with CSRP3. Interacts with CFL2; the stoichiometry influences F-actin depolymerization and possibly two molecules of CFL2 can interact with one molecule of CSRP3 resulting in the highest functional impact; the interaction is stronger with phosphorylated CFL2. In terms of processing, phosphorylated by PKC/PRKCA. In terms of tissue distribution, high in striated muscle and adult heart.

The protein localises to the nucleus. Its subcellular location is the cytoplasm. The protein resides in the cytoskeleton. It is found in the myofibril. It localises to the sarcomere. The protein localises to the z line. Its function is as follows. Positive regulator of myogenesis. Acts as a cofactor for myogenic bHLH transcription factors such as MYOD1, and probably MYOG and MYF6. Enhances the DNA-binding activity of the MYOD1:TCF3 isoform E47 complex and may promote formation of a functional MYOD1:TCF3 isoform E47:MEF2A complex involved in myogenesis. Plays a crucial and specific role in the organization of cytosolic structures in cardiomyocytes. Could play a role in mechanical stretch sensing. May be a scaffold protein that promotes the assembly of interacting proteins at Z-line structures. It is essential for calcineurin anchorage to the Z line. Required for stress-induced calcineurin-NFAT activation. The role in regulation of cytoskeleton dynamics by association with CFL2 is reported conflictingly. Proposed to contribute to the maintenance of muscle cell integrity through an actin-based mechanism. Can directly bind to actin filaments, cross-link actin filaments into bundles without polarity selectivity and protect them from dilution- and cofilin-mediated depolymerization; the function seems to involve its self-association. In vitro can inhibit PKC/PRKCA activity. Proposed to be involved in cardiac stress signaling by down-regulating excessive PKC/PRKCA signaling. The protein is Cysteine and glycine-rich protein 3 (Csrp3) of Rattus norvegicus (Rat).